Consider the following 201-residue polypeptide: Peptidyl-tRNA hydrolase (201 aa).

Tyr-17 contacts tRNA. His-22 serves as the catalytic Proton acceptor. TRNA-binding residues include Tyr-68, Asn-70, and Asn-116.

It belongs to the PTH family. Monomer.

The protein resides in the cytoplasm. It catalyses the reaction an N-acyl-L-alpha-aminoacyl-tRNA + H2O = an N-acyl-L-amino acid + a tRNA + H(+). Its function is as follows. Hydrolyzes ribosome-free peptidyl-tRNAs (with 1 or more amino acids incorporated), which drop off the ribosome during protein synthesis, or as a result of ribosome stalling. Catalyzes the release of premature peptidyl moieties from peptidyl-tRNA molecules trapped in stalled 50S ribosomal subunits, and thus maintains levels of free tRNAs and 50S ribosomes. The polypeptide is Peptidyl-tRNA hydrolase (Lawsonia intracellularis (strain PHE/MN1-00)).